A 186-amino-acid chain; its full sequence is MIRRLEYYGSPILRKKSSPIAEITDEIRNLVSDMCDTMEAHRGVGLAAPQVGKNVSLFVMCVDRETEDGELIFSESPRVFINPVLSDPSETPIIGKEGCLSIPGLRGEVFRPQKITVTAMDLNGKIFTEHLEGFTARIIMHETDHLNGVLYIDLMEEPKDPKKFKASLEKIKRRYNTHLSKEELVS.

Cys99 and His141 together coordinate Fe cation. Glu142 is an active-site residue. A Fe cation-binding site is contributed by His145.

Belongs to the polypeptide deformylase family. Requires Fe(2+) as cofactor.

The catalysed reaction is N-terminal N-formyl-L-methionyl-[peptide] + H2O = N-terminal L-methionyl-[peptide] + formate. In terms of biological role, removes the formyl group from the N-terminal Met of newly synthesized proteins. Requires at least a dipeptide for an efficient rate of reaction. N-terminal L-methionine is a prerequisite for activity but the enzyme has broad specificity at other positions. This chain is Peptide deformylase, found in Chlamydia pneumoniae (Chlamydophila pneumoniae).